A 1240-amino-acid polypeptide reads, in one-letter code: Serine/threonine-protein kinase TAO2 (1240 aa).

Serine 9 is modified (phosphoserine). One can recognise a Protein kinase domain in the interval 28-281 (FSDLREIGHG…SEVLLKHRFV (254 aa)). ATP is bound by residues 34–42 (IGHGSFGAV) and lysine 57. The active-site Proton acceptor is the aspartate 151. Serine 181 carries the post-translational modification Phosphoserine. The tract at residues 320 to 463 (APNGPGAEAP…PTSTSSSARR (144 aa)) is disordered. Residues 356–380 (SSHSVPSMSISASSQSSSVNSLADA) are compositionally biased toward low complexity. The segment covering 381 to 401 (SDNEEEEEEEEEEEEEEEEEG) has biased composition (acidic residues). Residues 402–417 (PESREMAMMQEGEHTV) are compositionally biased toward basic and acidic residues. Serine 422 carries the post-translational modification Phosphoserine. Coiled coils occupy residues 493–528 (SALREQLSGYKRMRRQHQKQLLALESRLRGEREEHS) and 581–608 (KELAALLEAQKRTYKLRKEQLKEELQEN). Position 663 is a phosphoserine (serine 663). A coiled-coil region spans residues 688-720 (LRQHEATRELELRQLQAVQRTRAELTRLQHQTE). A phosphoserine mark is found at serine 782, serine 830, and serine 832. Positions 805 to 934 (RILGKEGTTL…GDGCPSPDIP (130 aa)) form a coiled coil. Residues 899–946 (VLTPVPEEEEEEEEEGGAPIGTHRDPGDGCPSPDIPPEPPPSHLRQYP) form a disordered region. Residues 904-914 (PEEEEEEEEEG) show a composition bias toward acidic residues. Residues 931-940 (PDIPPEPPPS) are compositionally biased toward pro residues. 5 helical membrane-spanning segments follow: residues 972–992 (LLPLLLLLLLPLLAAQGGGGL), 994–1014 (AALLALEVGLVGLGASYLFLC), 1019–1039 (LPPGLFLLLAQGTALLAVLSL), 1045–1065 (LMGVPLGLGAAWLLAWPSLAL), and 1175–1195 (LASCLPPWAVHILASWGLLKG). Residue leucine 999 is modified to Omega-N-methylarginine. Leucine 1037 carries the post-translational modification Phosphoserine. The disordered stretch occupies residues 1212-1240 (LGLSASRQLPPGTVAGRRSQTRRTLPPWR).

This sequence belongs to the protein kinase superfamily. STE Ser/Thr protein kinase family. STE20 subfamily. In terms of assembly, interacts with MAP2K3 and MAP2K6. Self-associates. Interacts with tubulins. Interacts with MAP3K7 and interferes with MAP3K7-binding to CHUK and thus prevents NF-kappa-B activation. Isoform 2 interacts with PCDH8; this complex may also include CDH2. It depends on Mg(2+) as a cofactor. Post-translationally, autophosphorylated. Phosphorylated by ATM. In terms of processing, phosphorylated on Ser-1037 by MAPK14. This phosphorylation is required PCDH8 for endocytosis.

The protein localises to the cytoplasmic vesicle membrane. The protein resides in the cytoplasm. Its subcellular location is the cytoskeleton. It is found in the cell projection. It localises to the dendrite. It catalyses the reaction L-seryl-[protein] + ATP = O-phospho-L-seryl-[protein] + ADP + H(+). It carries out the reaction L-threonyl-[protein] + ATP = O-phospho-L-threonyl-[protein] + ADP + H(+). Its function is as follows. Serine/threonine-protein kinase involved in different processes such as membrane blebbing and apoptotic bodies formation DNA damage response and MAPK14/p38 MAPK stress-activated MAPK cascade. Phosphorylates itself, MBP, activated MAPK8, MAP2K3, MAP2K6 and tubulins. Activates the MAPK14/p38 MAPK signaling pathway through the specific activation and phosphorylation of the upstream MAP2K3 and MAP2K6 kinases. In response to DNA damage, involved in the G2/M transition DNA damage checkpoint by activating the p38/MAPK14 stress-activated MAPK cascade, probably by mediating phosphorylation of upstream MAP2K3 and MAP2K6 kinases. May affect microtubule organization and stability. May play a role in the osmotic stress-MAPK8 pathway. Prevents MAP3K7-mediated activation of CHUK, and thus NF-kappa-B activation. Isoform 2, but not isoform 1, is required for PCDH8 endocytosis. Following homophilic interactions between PCDH8 extracellular domains, isoform 2 phosphorylates and activates MAPK14/p38 MAPK which in turn phosphorylates isoform 2. This process leads to PCDH8 endocytosis and CDH2 cointernalization. Both isoforms are involved in MAPK14/p38 MAPK activation. The sequence is that of Serine/threonine-protein kinase TAO2 (Taok2) from Mus musculus (Mouse).